A 257-amino-acid chain; its full sequence is Type III pantothenate kinase (257 aa).

7-14 (DIGNSHTV) contributes to the ATP binding site. 106–109 (GTDR) is a binding site for substrate. Asp-108 acts as the Proton acceptor in catalysis. Asp-128 provides a ligand contact to K(+). Thr-132 serves as a coordination point for ATP. Thr-184 provides a ligand contact to substrate.

Belongs to the type III pantothenate kinase family. In terms of assembly, homodimer. Requires NH4(+) as cofactor. It depends on K(+) as a cofactor.

It is found in the cytoplasm. It catalyses the reaction (R)-pantothenate + ATP = (R)-4'-phosphopantothenate + ADP + H(+). The protein operates within cofactor biosynthesis; coenzyme A biosynthesis; CoA from (R)-pantothenate: step 1/5. Its function is as follows. Catalyzes the phosphorylation of pantothenate (Pan), the first step in CoA biosynthesis. The chain is Type III pantothenate kinase from Nocardioides sp. (strain ATCC BAA-499 / JS614).